We begin with the raw amino-acid sequence, 142 residues long: Large ribosomal subunit protein uL11 (142 aa).

Belongs to the universal ribosomal protein uL11 family. As to quaternary structure, part of the ribosomal stalk of the 50S ribosomal subunit. Interacts with L10 and the large rRNA to form the base of the stalk. L10 forms an elongated spine to which L12 dimers bind in a sequential fashion forming a multimeric L10(L12)X complex. In terms of processing, one or more lysine residues are methylated.

Functionally, forms part of the ribosomal stalk which helps the ribosome interact with GTP-bound translation factors. This Sinorhizobium medicae (strain WSM419) (Ensifer medicae) protein is Large ribosomal subunit protein uL11.